The sequence spans 340 residues: Adenosine kinase (340 aa).

Residue aspartate 293 is part of the active site.

This sequence belongs to the carbohydrate kinase PfkB family. Mg(2+) is required as a cofactor.

The catalysed reaction is adenosine + ATP = AMP + ADP + H(+). The protein operates within purine metabolism; AMP biosynthesis via salvage pathway; AMP from adenosine: step 1/1. ATP dependent phosphorylation of adenosine and other related nucleoside analogs to monophosphate derivatives. ADO1 does not play a major role in adenine utilization in yeast. Its physiological role could primarily be to recycle adenosine produced by the methyl cycle. This chain is Adenosine kinase, found in Saccharomyces cerevisiae (strain ATCC 204508 / S288c) (Baker's yeast).